The following is a 274-amino-acid chain: Formamidopyrimidine-DNA glycosylase (274 aa).

The active-site Schiff-base intermediate with DNA is Pro2. Glu3 (proton donor) is an active-site residue. Catalysis depends on Lys58, which acts as the Proton donor; for beta-elimination activity. 3 residues coordinate DNA: His91, Arg110, and Lys152. Residues 237-271 (KVYGRKNLPCLVCENKIETVVIAGRHSAFCPHCQP) form an FPG-type zinc finger. Arg261 acts as the Proton donor; for delta-elimination activity in catalysis.

This sequence belongs to the FPG family. As to quaternary structure, monomer. Zn(2+) is required as a cofactor.

It carries out the reaction Hydrolysis of DNA containing ring-opened 7-methylguanine residues, releasing 2,6-diamino-4-hydroxy-5-(N-methyl)formamidopyrimidine.. The enzyme catalyses 2'-deoxyribonucleotide-(2'-deoxyribose 5'-phosphate)-2'-deoxyribonucleotide-DNA = a 3'-end 2'-deoxyribonucleotide-(2,3-dehydro-2,3-deoxyribose 5'-phosphate)-DNA + a 5'-end 5'-phospho-2'-deoxyribonucleoside-DNA + H(+). Functionally, involved in base excision repair of DNA damaged by oxidation or by mutagenic agents. Acts as a DNA glycosylase that recognizes and removes damaged bases. Has a preference for oxidized purines, such as 7,8-dihydro-8-oxoguanine (8-oxoG). Has AP (apurinic/apyrimidinic) lyase activity and introduces nicks in the DNA strand. Cleaves the DNA backbone by beta-delta elimination to generate a single-strand break at the site of the removed base with both 3'- and 5'-phosphates. The polypeptide is Formamidopyrimidine-DNA glycosylase (Legionella pneumophila (strain Paris)).